The sequence spans 494 residues: Protein nucleotidyltransferase YdiU (494 aa).

8 residues coordinate ATP: Gly-101, Gly-103, Arg-104, Lys-123, Asp-135, Gly-136, Arg-186, and Arg-193. The Proton acceptor role is filled by Asp-262. Mg(2+)-binding residues include Asn-263 and Asp-272. Asp-272 provides a ligand contact to ATP.

It belongs to the SELO family. The cofactor is Mg(2+). Requires Mn(2+) as cofactor.

It catalyses the reaction L-seryl-[protein] + ATP = 3-O-(5'-adenylyl)-L-seryl-[protein] + diphosphate. It carries out the reaction L-threonyl-[protein] + ATP = 3-O-(5'-adenylyl)-L-threonyl-[protein] + diphosphate. The catalysed reaction is L-tyrosyl-[protein] + ATP = O-(5'-adenylyl)-L-tyrosyl-[protein] + diphosphate. The enzyme catalyses L-histidyl-[protein] + UTP = N(tele)-(5'-uridylyl)-L-histidyl-[protein] + diphosphate. It catalyses the reaction L-seryl-[protein] + UTP = O-(5'-uridylyl)-L-seryl-[protein] + diphosphate. It carries out the reaction L-tyrosyl-[protein] + UTP = O-(5'-uridylyl)-L-tyrosyl-[protein] + diphosphate. Nucleotidyltransferase involved in the post-translational modification of proteins. It can catalyze the addition of adenosine monophosphate (AMP) or uridine monophosphate (UMP) to a protein, resulting in modifications known as AMPylation and UMPylation. The polypeptide is Protein nucleotidyltransferase YdiU (Chromohalobacter salexigens (strain ATCC BAA-138 / DSM 3043 / CIP 106854 / NCIMB 13768 / 1H11)).